The sequence spans 1234 residues: Complement factor H (1234 aa).

Residues 1-18 (MRLSARIIWLILWTVCAA) form the signal peptide. Sushi domains lie at 19 to 82 (EDCK…ICRK), 83 to 143 (KPCG…LCEV), 144 to 207 (VKCL…RCVE), 208 to 264 (ILCT…FCEE), 265 to 322 (KRCS…RCTL), 324 to 386 (PCEF…VPCV), 387 to 444 (RKCV…KCIR), 446 to 507 (KTCS…SCIK), 508 to 566 (SCDM…SCYE), 567 to 624 (RECS…TCKG), 627 to 685 (ASCA…VCIE), 688 to 745 (RTCG…KCVA), 750 to 804 (EKCR…NCTS), 806 to 863 (TSCP…RCIE), 865 to 933 (IPCS…RCVG), 934 to 991 (LPCG…KCIK), 992 to 1050 (TDCD…VCKD), 1051 to 1109 (NSCV…KCRD), 1112 to 1170 (GKCG…TCLH), and 1171 to 1234 (ACVI…PTCV). 40 cysteine pairs are disulfide-bonded: Cys-21-Cys-66, Cys-52-Cys-80, Cys-85-Cys-129, Cys-114-Cys-141, Cys-146-Cys-192, Cys-178-Cys-205, Cys-210-Cys-251, Cys-237-Cys-262, Cys-267-Cys-309, Cys-294-Cys-320, Cys-325-Cys-374, Cys-357-Cys-385, Cys-389-Cys-431, Cys-416-Cys-442, Cys-448-Cys-494, Cys-477-Cys-505, Cys-509-Cys-553, Cys-536-Cys-564, Cys-569-Cys-610, Cys-597-Cys-622, Cys-629-Cys-672, Cys-658-Cys-683, Cys-690-Cys-732, Cys-718-Cys-743, Cys-752-Cys-791, Cys-780-Cys-802, Cys-808-Cys-850, Cys-836-Cys-861, Cys-867-Cys-920, Cys-906-Cys-931, Cys-936-Cys-978, Cys-964-Cys-989, Cys-994-Cys-1037, Cys-1023-Cys-1048, Cys-1053-Cys-1096, Cys-1082-Cys-1107, Cys-1114-Cys-1157, Cys-1143-Cys-1168, Cys-1172-Cys-1223, and Cys-1206-Cys-1233. N-linked (GlcNAc...) asparagine glycosylation is found at Asn-676, Asn-721, Asn-773, and Asn-801. A disordered region spans residues 872 to 896 (TIEHGSINLPRSSEERRDSIESSSH). Residues 883 to 896 (SSEERRDSIESSSH) show a composition bias toward basic and acidic residues. N-linked (GlcNAc...) asparagine glycans are attached at residues Asn-1030 and Asn-1061. The residue at position 1198 (Ser-1198) is a Phosphoserine. N-linked (GlcNAc...) asparagine glycosylation is present at Asn-1225.

Homodimer. Also forms homooligomers. Interacts with complement protein C3b; this interaction inhibits complement activation. Interacts with complement protein C3d. Interacts with CR3/ITGAM; this interaction mediates adhesion of neutrophils to pathogens leading to pathogen clearance. Sulfated on tyrosine residues. In terms of tissue distribution, CFH is one of the most abundant complement components in blood where the liver is the major source of CFH protein in vivo. in addition, CFH is secreted by additional cell types including monocytes, fibroblasts, or endothelial cells.

Its subcellular location is the secreted. Glycoprotein that plays an essential role in maintaining a well-balanced immune response by modulating complement activation. Acts as a soluble inhibitor of complement, where its binding to self markers such as glycan structures prevents complement activation and amplification on cell surfaces. Accelerates the decay of the complement alternative pathway (AP) C3 convertase C3bBb, thus preventing local formation of more C3b, the central player of the complement amplification loop. As a cofactor of the serine protease factor I, CFH also regulates proteolytic degradation of already-deposited C3b. In addition, mediates several cellular responses through interaction with specific receptors. For example, interacts with CR3/ITGAM receptor and thereby mediates the adhesion of human neutrophils to different pathogens. In turn, these pathogens are phagocytosed and destroyed. The protein is Complement factor H (Cfh) of Mus musculus (Mouse).